Consider the following 599-residue polypeptide: MTDLSHIRNFSIIAHIDHGKSTIADRFIQICGGLSDREMEAQVLDSMDLERERGITIKAHSVTLNYKARDGKTYQLNFIDTPGHVDFTYEVSRSLAACEGALLVVDAAQGVEAQSVANCYTAIEQGLEVIPVLNKMDLPQAEPDRVAQEIEDIIGLDATEAVRCSAKSGLGMEDVLEELVRLVPPPTGDVGAPLQALIIDSWFDNYLGVVSLVRVVQGTLRLKDKIIAKTIGKSQLVDGLGVFTPKPLQLKELKAGEVGFVVAGIKDIHGAPVGDTITHAQTPDVEALAGFQKIKPQVYAGMFPVSSDDFESFREALAKLTLNDASLFYEPESSDALGFGFRCGFLGMLHMEIIQERLEREYDLDLITTAPTVVYEIETAKGETIFVDNPSKLPDPGSINEMREPIVEANILVPQEHLGNVITLCVEKRGVQKDLQFTGSQVAVRYELPMNEVVTDFFDRLKSVSRGFASLDYNFLRFQPAKLVRLDVLINGDKVDALALIVHRDKSQHMGRQLVEKMKDLIPRQMFDVAIQAAIGGQVVARSTVKALRKDVLAKCYGGDATRKKKLLEKQKAGKKRMKQVGNVEIPQAAFFAVLKIDS.

The tr-type G domain occupies 5–187 (SHIRNFSIIA…ELVRLVPPPT (183 aa)). GTP-binding positions include 17-22 (DHGKST) and 134-137 (NKMD).

It belongs to the TRAFAC class translation factor GTPase superfamily. Classic translation factor GTPase family. LepA subfamily.

It is found in the cell inner membrane. The enzyme catalyses GTP + H2O = GDP + phosphate + H(+). Functionally, required for accurate and efficient protein synthesis under certain stress conditions. May act as a fidelity factor of the translation reaction, by catalyzing a one-codon backward translocation of tRNAs on improperly translocated ribosomes. Back-translocation proceeds from a post-translocation (POST) complex to a pre-translocation (PRE) complex, thus giving elongation factor G a second chance to translocate the tRNAs correctly. Binds to ribosomes in a GTP-dependent manner. The protein is Elongation factor 4 of Cellvibrio japonicus (strain Ueda107) (Pseudomonas fluorescens subsp. cellulosa).